Reading from the N-terminus, the 568-residue chain is Potassium-transporting ATPase potassium-binding subunit (568 aa).

A run of 10 helical transmembrane segments spans residues 3–23, 64–84, 133–153, 179–199, 255–275, 281–301, 375–395, 418–438, 497–517, and 536–556; these read TEILGVVAQVALMVILAYPLG, FLKALLILNAFWFVWGMVLLV, FVIMLFQFITAATGMAAMAGI, ILLPLSLIVGFILILQGTPMG, MVECWSILIIPMAMVLALGFY, LAYSIFGVMLFAFLVGVCINV, FGGVGVGWMNYYTFIIIAVFI, IATIVALLHPFVILVFTAISS, IVLILSRFLPIIGQVAIAGLL, and TFGIMTFVVIFIVAALSFFPV.

This sequence belongs to the KdpA family. As to quaternary structure, the system is composed of three essential subunits: KdpA, KdpB and KdpC.

The protein resides in the cell inner membrane. Its function is as follows. Part of the high-affinity ATP-driven potassium transport (or Kdp) system, which catalyzes the hydrolysis of ATP coupled with the electrogenic transport of potassium into the cytoplasm. This subunit binds the periplasmic potassium ions and delivers the ions to the membrane domain of KdpB through an intramembrane tunnel. The protein is Potassium-transporting ATPase potassium-binding subunit of Bacteroides thetaiotaomicron (strain ATCC 29148 / DSM 2079 / JCM 5827 / CCUG 10774 / NCTC 10582 / VPI-5482 / E50).